Here is a 396-residue protein sequence, read N- to C-terminus: Beta-1,3-N-acetylglucosaminyltransferase radical fringe (396 aa).

Residues 1–6 are Cytoplasmic-facing; sequence MNFSCL. A helical; Signal-anchor for type II membrane protein membrane pass occupies residues 7-27; that stretch reads GLSKICFLVSVIFCTFLLLFI. Residues 28–396 are Lumenal-facing; that stretch reads PKTKTPWRPR…THWCPPRKTR (369 aa). N-linked (GlcNAc...) asparagine glycans are attached at residues Asn49 and Asn120. Arg145 is a binding site for substrate. The N-linked (GlcNAc...) asparagine glycan is linked to Asn184. 2 disulfides stabilise this stretch: Cys185–Cys196 and Cys214–Cys277. Residue Asp218 coordinates substrate. Asp219 provides a ligand contact to Mn(2+). Residue Asp307 is part of the active site. His331 lines the Mn(2+) pocket. An intrachain disulfide couples Cys381 to Cys390.

Belongs to the glycosyltransferase 31 family. Mn(2+) serves as cofactor. In terms of tissue distribution, detected in the mesanchymal region of the developing limb. Expressed in mesoderm but not in ectoderm with no evident boundary of expression.

Its subcellular location is the golgi apparatus membrane. It catalyses the reaction 3-O-(alpha-L-fucosyl)-L-threonyl-[EGF-like domain protein] + UDP-N-acetyl-alpha-D-glucosamine = 3-O-(N-acetyl-beta-D-glucosaminyl-(1-&gt;3)-alpha-L-fucosyl)-L-threonyl-[EGF-like domain protein] + UDP + H(+). The enzyme catalyses 3-O-(alpha-L-fucosyl)-L-seryl-[EGF-like domain protein] + UDP-N-acetyl-alpha-D-glucosamine = 3-O-(N-acetyl-beta-D-glucosaminyl-(1-&gt;3)-alpha-L-fucosyl)-L-seryl-[EGF-like domain protein] + UDP + H(+). Its function is as follows. Glycosyltransferase that initiates the elongation of O-linked fucose residues attached to EGF-like repeats in the extracellular domain of Notch molecules. Involved in forelimb development and in adult forelimb regeneration. In Notophthalmus viridescens (Eastern newt), this protein is Beta-1,3-N-acetylglucosaminyltransferase radical fringe (RFNG).